A 450-amino-acid chain; its full sequence is Probable ECA polymerase (450 aa).

The next 11 helical transmembrane spans lie at 6–26 (FSGL…LTWF), 37–57 (VFFS…TSVL), 63–83 (VGVA…CFYA), 120–140 (LMGI…FLLF), 155–175 (GVAL…IYFL), 181–201 (AWLF…MIVG), 207–227 (IIIA…ISLW), 228–248 (MLVA…LKRY), 341–361 (LVVM…GLII), 378–398 (YKAA…IVLA), and 410–430 (VFFL…FWLF).

It belongs to the WzyE family. In terms of assembly, probably part of a complex composed of WzxE, WzyE and WzzE.

The protein resides in the cell inner membrane. It functions in the pathway bacterial outer membrane biogenesis; enterobacterial common antigen biosynthesis. Its function is as follows. Probably involved in the polymerization of enterobacterial common antigen (ECA) trisaccharide repeat units. The chain is Probable ECA polymerase from Citrobacter koseri (strain ATCC BAA-895 / CDC 4225-83 / SGSC4696).